The primary structure comprises 387 residues: Paralemmin-1 (387 aa).

Met-1 carries the post-translational modification N-acetylmethionine. Residues 9–101 (TSQQERLQAI…EKEIEVLERG (93 aa)) are a coiled coil. Basic and acidic residues-rich tracts occupy residues 31-41 (KRRQLEDERRQ) and 69-102 (DLRR…ERGD). Residues 31 to 160 (KRRQLEDERR…VSNTPLRTVD (130 aa)) form a disordered region. The span at 104–117 (APATAKENAAAPSP) shows a compositional bias: low complexity. Phosphoserine occurs at positions 116 and 124. 2 positions are modified to phosphothreonine: Thr-141 and Thr-145. Ser-162 bears the Phosphoserine mark. The residue at position 243 (Thr-243) is a Phosphothreonine. At Ser-245 the chain carries Phosphoserine. Disordered regions lie at residues 247–296 (AGST…GQEP) and 335–378 (AEPK…DMKK). Positions 286-296 (GPPGIQPGQEP) are enriched in low complexity. Residue Ser-346 is modified to Phosphoserine. Thr-367 carries the phosphothreonine modification. Ser-369 bears the Phosphoserine mark. S-palmitoyl cysteine attachment occurs at residues Cys-381 and Cys-383. Cys-384 carries the post-translational modification Cysteine methyl ester. A lipid anchor (S-farnesyl cysteine) is attached at Cys-384. Residues 385–387 (SIM) constitute a propeptide, removed in mature form.

Belongs to the paralemmin family. In terms of assembly, interacts with dopamine receptor DRD3. In terms of tissue distribution, widely expressed with highest expression in brain and testis and intermediate expression in heart and adrenal gland.

Its subcellular location is the cell membrane. The protein resides in the cell projection. It localises to the filopodium membrane. The protein localises to the axon. It is found in the dendrite. Its subcellular location is the dendritic spine. The protein resides in the basolateral cell membrane. It localises to the apicolateral cell membrane. In terms of biological role, involved in plasma membrane dynamics and cell process formation. Isoform 1 and isoform 2 are necessary for axonal and dendritic filopodia induction, for dendritic spine maturation and synapse formation in a palmitoylation-dependent manner. The polypeptide is Paralemmin-1 (PALM) (Homo sapiens (Human)).